The following is a 1233-amino-acid chain: Rho guanine nucleotide exchange factor 10-like protein (1233 aa).

Positions 1–10 are enriched in pro residues; that stretch reads MASSNPPPQP. A disordered region spans residues 1-93; the sequence is MASSNPPPQP…GTGVPAWVSN (93 aa). Over residues 26–46 the composition is skewed to acidic residues; it reads EAEDDPGEAFEFDDSDDEEDT. A Phosphoserine modification is found at serine 40. A compositionally biased stretch (low complexity) spans 72–89; that stretch reads PVTDPDPAAAPPGTGVPA. Phosphotyrosine occurs at positions 131 and 152. The segment at 159–193 is disordered; the sequence is GAPRQAEDLGWSSSEFESYSEDSGEEAKPEVEPAK. Residues 183–193 are compositionally biased toward basic and acidic residues; that stretch reads EEAKPEVEPAK. Serine 240 bears the Phosphoserine mark. The 188-residue stretch at 275 to 462 folds into the DH domain; it reads VRRHILGSIV…ETLAEKLNEQ (188 aa). Residues 1089 to 1104 are compositionally biased toward basic and acidic residues; sequence QEEAEGPRAEEEKPDG. Disordered stretches follow at residues 1089–1117 and 1140–1161; these read QEEAEGPRAEEEKPDGQAHQPMPDSHVGR and PLLSMREPAPADGAALEHSEED.

As to quaternary structure, interacts with RHOA, RHOB and RHOC.

The protein resides in the cytoplasm. Functionally, acts as a guanine nucleotide exchange factor (GEF) for RHOA, RHOB and RHOC. This chain is Rho guanine nucleotide exchange factor 10-like protein (ARHGEF10L), found in Pongo abelii (Sumatran orangutan).